The primary structure comprises 644 residues: Anti-sigma-I factor RsgI3 (644 aa).

Residues methionine 1–arginine 56 lie on the Cytoplasmic side of the membrane. The RsgI N-terminal anti-sigma domain occupies asparagine 3–glutamate 50. A helical transmembrane segment spans residues isoleucine 57–isoleucine 77. Over asparagine 78 to aspartate 644 the chain is Extracellular. Over residues proline 302–proline 328 the composition is skewed to polar residues. Residues proline 302–leucine 359 are disordered. PA14 domains are found at residues glycine 354 to glutamine 491 and lysine 502 to asparagine 640.

Interacts (via RsgI N-terminal anti-sigma domain) with SigI3.

Its subcellular location is the cell membrane. In terms of biological role, anti-sigma factor for SigI3. Negatively regulates SigI3 activity through direct interaction. Binding of the polysaccharide substrate to the extracellular C-terminal sensing domain of RsgI3 may induce a conformational change in its N-terminal cytoplasmic region, leading to the release and activation of SigI3. This chain is Anti-sigma-I factor RsgI3, found in Acetivibrio thermocellus (strain ATCC 27405 / DSM 1237 / JCM 9322 / NBRC 103400 / NCIMB 10682 / NRRL B-4536 / VPI 7372) (Clostridium thermocellum).